A 458-amino-acid chain; its full sequence is Argininosuccinate lyase (458 aa).

This sequence belongs to the lyase 1 family. Argininosuccinate lyase subfamily.

It localises to the cytoplasm. It carries out the reaction 2-(N(omega)-L-arginino)succinate = fumarate + L-arginine. It participates in amino-acid biosynthesis; L-arginine biosynthesis; L-arginine from L-ornithine and carbamoyl phosphate: step 3/3. This chain is Argininosuccinate lyase, found in Salmonella agona (strain SL483).